We begin with the raw amino-acid sequence, 562 residues long: Aureusidin synthase (562 aa).

Disulfide bonds link cysteine 71–cysteine 86 and cysteine 85–cysteine 148. Residues histidine 147, histidine 168, histidine 177, histidine 301, histidine 305, and histidine 335 each coordinate Cu cation. A cross-link (2'-(S-cysteinyl)-histidine (Cys-His)) is located at residues 151–168 (CAGAYNQAGFTNLKLQIH).

This sequence belongs to the tyrosinase family. In terms of assembly, monomer. Cu(2+) serves as cofactor. Post-translationally, glycosylated. In terms of processing, contains probably N- and C-terminal propeptides. As to expression, expressed in petals. Not detected in stems and leaves.

The protein localises to the vacuole lumen. The catalysed reaction is 2',4,4',6'-tetrahydroxychalcone 4'-O-beta-D-glucoside + O2 = aureusidin 6-O-beta-glucoside + H2O. It catalyses the reaction 2 2',3,4,4',6'-pentahydroxychalcone 4'-O-beta-D-glucoside + O2 + 2 H(+) = 2 aureusidin 6-O-beta-glucoside + 2 H2O. The enzyme catalyses 2',3,4,4',6'-pentahydroxychalcone 4'-O-beta-D-glucoside + O2 + H(+) = bracteatin 6-O-beta-glucoside + H2O. Its activity is regulated as follows. H(2)O(2) activates the 3-hydroxylation and oxidative cyclization of tetrahydroxychalcone but inhibits reaction with pentahydroxychalcone. Inhibited by phenylthiourea. Its function is as follows. Involved in the biosynthesis of aurones, plant flavonoids that provide yellow coloration to flowers. Can use tetrahydroxychalcone (THC), pentahydroxychalcone (PHC), THC 4'-glucoside and PHC 4'-glucoside as substrates, but not 2'-hydroxychalcone, 4-hydroxychalcone, PHC 3-glucoside, 2',6'-dihydroxy-4,4'-dimethoxychalcone, naringenin, eriodictyol and 4,4',6-trihydroxyaurone. Can also produce bracteatin from PHC. The protein is Aureusidin synthase (AS1) of Antirrhinum majus (Garden snapdragon).